The following is a 265-amino-acid chain: Tryptophan synthase alpha chain (265 aa).

Active-site proton acceptor residues include E45 and D56.

Belongs to the TrpA family. In terms of assembly, tetramer of two alpha and two beta chains.

The enzyme catalyses (1S,2R)-1-C-(indol-3-yl)glycerol 3-phosphate + L-serine = D-glyceraldehyde 3-phosphate + L-tryptophan + H2O. It functions in the pathway amino-acid biosynthesis; L-tryptophan biosynthesis; L-tryptophan from chorismate: step 5/5. In terms of biological role, the alpha subunit is responsible for the aldol cleavage of indoleglycerol phosphate to indole and glyceraldehyde 3-phosphate. This is Tryptophan synthase alpha chain from Halalkalibacterium halodurans (strain ATCC BAA-125 / DSM 18197 / FERM 7344 / JCM 9153 / C-125) (Bacillus halodurans).